The sequence spans 573 residues: AP-4 complex accessory subunit Tepsin (573 aa).

Positions 8-141 (RDRLSFLHRL…FSDAVPQPPS (134 aa)) constitute an ENTH domain. 2 disordered regions span residues 136–155 (VPQP…MGAQ) and 194–311 (NAVR…NDCQ). The segment covering 137–150 (PQPPSQPPQIPPPA) has biased composition (pro residues). Polar residues predominate over residues 217-229 (PAVTPSASHTHPN). Low complexity predominate over residues 260 to 293 (SSPSSQNSSCTSNLSRASDSGSRSGSDSHSGTSR). A compositionally biased stretch (basic and acidic residues) spans 294-303 (EPGDLAERAE). Position 400 is a phosphoserine (Ser-400). A disordered region spans residues 497–526 (CSSEQGTESEQRLENTDTPEDSSSPLPWSP). Positions 526–536 (PNSLFAGMELV) are interaction with AP4B1. Positions 563–573 (SEPSAFAFLNM) are interaction with AP4E1.

As to quaternary structure, interacts with AP4B1 and AP4E1; the interaction is direct and mediates the association of TEPSIN with the adapter-like complex 4 (AP-4), a heterotetramer composed of AP4B1, AP4E1, AP4M1 and AP4S1.

Its subcellular location is the golgi apparatus. The protein localises to the trans-Golgi network membrane. It is found in the cytoplasmic vesicle. It localises to the cytoplasm. The protein resides in the cytosol. In terms of biological role, associates with the adapter-like complex 4 (AP-4) and may therefore play a role in vesicular trafficking of proteins at the trans-Golgi network. This chain is AP-4 complex accessory subunit Tepsin, found in Mus musculus (Mouse).